The following is a 323-amino-acid chain: Mitochondrial glutamate carrier 1 (323 aa).

3 Solcar repeats span residues 6 to 93 (ISLP…FRHQ), 101 to 214 (LTLL…LNQL), and 223 to 312 (SPFY…GIAE). 6 helical membrane-spanning segments follow: residues 12–32 (LING…IDLA), 62–82 (YFGM…EKAI), 107–127 (MLAG…MEML), 189–209 (GLGA…PLFA), 223–243 (SPFY…AVAV), and 292–312 (ALVI…GIAE).

The protein belongs to the mitochondrial carrier (TC 2.A.29) family. In terms of tissue distribution, expressed at high levels in brain, liver, and pancreas.

Its subcellular location is the mitochondrion inner membrane. It catalyses the reaction L-glutamate(in) + H(+)(in) = L-glutamate(out) + H(+)(out). Functionally, mitochondrial glutamate/H(+) symporter. Responsible for the transport of glutamate from the cytosol into the mitochondrial matrix with the concomitant import of a proton. Plays a role in the control of glucose-stimulated insulin secretion. The protein is Mitochondrial glutamate carrier 1 of Homo sapiens (Human).